The chain runs to 89 residues: Small ribosomal subunit protein uS15 (89 aa).

This sequence belongs to the universal ribosomal protein uS15 family. In terms of assembly, part of the 30S ribosomal subunit. Forms a bridge to the 50S subunit in the 70S ribosome, contacting the 23S rRNA.

One of the primary rRNA binding proteins, it binds directly to 16S rRNA where it helps nucleate assembly of the platform of the 30S subunit by binding and bridging several RNA helices of the 16S rRNA. Functionally, forms an intersubunit bridge (bridge B4) with the 23S rRNA of the 50S subunit in the ribosome. The chain is Small ribosomal subunit protein uS15 from Chlamydia abortus (strain DSM 27085 / S26/3) (Chlamydophila abortus).